The following is a 256-amino-acid chain: Phosphonates import ATP-binding protein PhnC (256 aa).

Positions 3-247 (LELKNISKTY…VLHKEIFTNV (245 aa)) constitute an ABC transporter domain. An ATP-binding site is contributed by 36-43 (GLSGAGKS).

This sequence belongs to the ABC transporter superfamily. Phosphonates importer (TC 3.A.1.9.1) family. As to quaternary structure, the complex is composed of two ATP-binding proteins (PhnC), two transmembrane proteins (PhnE) and a solute-binding protein (PhnD).

It localises to the cell inner membrane. The catalysed reaction is phosphonate(out) + ATP + H2O = phosphonate(in) + ADP + phosphate + H(+). Its function is as follows. Part of the ABC transporter complex PhnCDE involved in phosphonates import. Responsible for energy coupling to the transport system. The polypeptide is Phosphonates import ATP-binding protein PhnC (Treponema denticola (strain ATCC 35405 / DSM 14222 / CIP 103919 / JCM 8153 / KCTC 15104)).